We begin with the raw amino-acid sequence, 114 residues long: UPF0102 protein HP_0823 (114 aa).

Belongs to the UPF0102 family.

The sequence is that of UPF0102 protein HP_0823 from Helicobacter pylori (strain ATCC 700392 / 26695) (Campylobacter pylori).